Consider the following 839-residue polypeptide: MIQFSGRACLRQGWKCAAGVGLRCHGAHSSPPLHVPPFRRYTATYSRADETGHIDTAPNESVFYFDSVLPVKALFSRRFAPLDLAPSMTGRIGNLIIKLTGATPLNVIGRAFPLELQENIQQVIPRYSEGGAFVKLSHPPNMDKEGLSSLLNTHLEQNPLKLWFSPFTSVRASLVRGRPWLEDLQRSPSSRIKVEFLPTSPGASSVELTPELLYSLSRRYGKLADIIPQPSDSKIQPRYALLDFTRPSYAVIAKNCLHGYKVSASEGGGSAGTLLKLSYERKLKPHVIRGWIVSHPRIVIPIIAAVIAAITVIVFDPIRTFFIKIQIAPPIDVQDNRLWQWIQRQASKANDILSLRQRQRSDSRGLKAIWEDRKEDIQRLQTWLLEATNTFTVVHGPRGSGKKELVLDEVLKGYRHKLVIDCKPIQEARGDSATINAAAAEVGYRPVFSWMNSISSLIDVATQTLGANAGLSETLDSQLGHILQNTANALKKVALEKKRWDGKDSHMTDEEFLEAHPECRPVVVIDNFLYKANNNPMIYEKLSDWAAALTVSNIARVIFLTGDISYSKTLSRALPNQIFHEIQLGDCTPDVAKQFVLDHLHTDQSNSSSYTQAGPDTIEGGDIKDLEDCIEVLGGRLSDLEFFARMISRGQSPSDAVHDIIVQSAAEILKMYIADVDNTVRNWTPEQAWYLVSSLAEAQGGSILYSEALFSDLFKKDGESTIRALEQAELISVTTLNDRPSTIKPGRPVFAAAFRRLLEDDVLRCRLGLRTLGQQIAMENANINKYEGELQVLGSLEKEPKEIRPRVRWLLEKLAGSQAKIEKYEKESVGLRRILQSKM.

A mitochondrion-targeting transit peptide spans 1–42 (MIQFSGRACLRQGWKCAAGVGLRCHGAHSSPPLHVPPFRRYT). The Mitochondrial matrix portion of the chain corresponds to 43–297 (ATYSRADETG…IRGWIVSHPR (255 aa)). The region spanning 190–282 (SRIKVEFLPT…TLLKLSYERK (93 aa)) is the RRM domain. Residues 298–318 (IVIPIIAAVIAAITVIVFDPI) traverse the membrane as a helical segment. Residues 319-839 (RTFFIKIQIA…GLRRILQSKM (521 aa)) are Mitochondrial intermembrane-facing. Positions 769 to 838 (LRTLGQQIAM…VGLRRILQSK (70 aa)) form a coiled coil.

Belongs to the YME2 family.

It localises to the mitochondrion inner membrane. Plays a role in maintaining the mitochondrial genome and in controlling the mtDNA escape. Involved in the regulation of mtDNA nucleotide structure and number. May have a dispensable role in early maturation of pre-rRNA. The chain is Mitochondrial escape protein 2 (YME2) from Coccidioides immitis (strain RS) (Valley fever fungus).